The primary structure comprises 761 residues: Subtilisin-like protease SBT3 (761 aa).

The N-terminal stretch at 1–22 is a signal peptide; sequence MELLHLLLFSWALSAHLFLALA. A propeptide spanning residues 23-112 is cleaved from the precursor; sequence QRSTYIVHLD…AYKDRTVEPH (90 aa). The Inhibitor I9 domain maps to 26–110; the sequence is TYIVHLDKSL…ISAYKDRTVE (85 aa). One can recognise a Peptidase S8 domain in the interval 116-606; the sequence is TSDFLKLNPS…AGHVDPNRAL (491 aa). Asp144 (charge relay system) is an active-site residue. Cys170 and Cys181 are joined by a disulfide. N-linked (GlcNAc...) (complex) asparagine; alternate glycans are attached at residues Asn177 and Asn203. 2 N-linked (GlcNAc...) (paucimannose) asparagine; alternate glycosylation sites follow: Asn177 and Asn203. His215 acts as the Charge relay system in catalysis. A glycan (N-linked (GlcNAc...) (paucimannose) asparagine; partial) is linked at Asn376. Cys382 and Cys401 are joined by a disulfide. Residue Ser538 is the Charge relay system of the active site. The interval 574–598 is disordered; that stretch reads LDNTRKPIKDSDNNKAATPLDMGAG. The segment covering 575-586 has biased composition (basic and acidic residues); it reads DNTRKPIKDSDN. A disulfide bridge links Cys624 with Cys645. Residues Asn697 and Asn745 are each glycosylated (N-linked (GlcNAc...) (complex) asparagine; alternate). Residues Asn697 and Asn745 are each glycosylated (N-linked (GlcNAc...) (paucimannose) asparagine; alternate). The segment at 756-761 is necessary for prodomain cleavage and secretion; the sequence is PIIEVW.

This sequence belongs to the peptidase S8 family. As to quaternary structure, homodimer. Post-translationally, propeptide is internally cleaved at Asn-38 and Asp-52 in a pH-dependent manner leading to the dissociation of the propeptide from the catalytic domain and resulting in the release of the active subtilase. Cleavage occurs at pH 5.7 and to a stronger extent at pH 5.2. Expressed in flowers, cotyledons and leaves with the highest expression in roots.

The protein resides in the secreted. Inhibited by 1 mM 4-(2-aminoethyl)-benzenesulfonyl fluoride (AEBSF), a general inhibitor of serine proteinases, but not by the more selective serine protease inhibitors N-alpha-tosyl-L-lysinyl-chloromethylketone (TLCK), N-tosyl-L-phenylalaninyl-chloromethylketone (TPCK), leupeptin, aprotinin or benzamidine. Its proteolytic activity is autoinhibited by the non-covalent binding of the propeptide to the catalytic domain. No effect on activity by the addition of CaCl(2) or calcium chelators. In terms of biological role, serine protease. Has preference for Gln in the P1 position and Lys in the P2 position of oligopeptide substrates. Active also with His in the P1 position. Involved in resistance against insects partly by regulating expression of systemic wound response genes and possibly by its post-ingestive activity in the insect gut. Apart from the role in defense, may be involved in regulation of pectin methylesterases (PMEs) activity and pectin methylesterification of the cell wall. This chain is Subtilisin-like protease SBT3, found in Solanum lycopersicum (Tomato).